A 336-amino-acid chain; its full sequence is Transmembrane protein 19 (336 aa).

6 helical membrane passes run 15 to 35, 49 to 69, 84 to 104, 218 to 238, 257 to 277, and 313 to 333; these read MITN…FWII, ISPW…SNGL, VVGF…LMFF, VTVV…IAYF, IIAF…YLGA, and VNLF…WGFW.

The protein belongs to the TMEM19 family.

Its subcellular location is the membrane. In Homo sapiens (Human), this protein is Transmembrane protein 19 (TMEM19).